We begin with the raw amino-acid sequence, 120 residues long: Histone H3-like centromeric protein cnp1 (120 aa).

Positions 1–26 (MAKKSLMAEPGDPIPRPRKKRYRPGT) are disordered. Residues 14–120 (IPRPRKKRYR…MQLARRIRGA (107 aa)) are H3-like.

The protein belongs to the histone H3 family. Component of centromeric nucleosomes, where DNA is wrapped around a histone octamer core. The octamer contains two molecules each of H2A, H2B, cnp1/CENPA and H4 assembled in one cnp1-H4 heterotetramer and two H2A-H2B heterodimers. Interacts with the inner kinetochore. Component of centromeric nucleosomes. Interacts with mis6. Interacts with sim4. In terms of processing, ubiquitinated. Is degraded through ubiquitin-mediated proteolysis when not protected by its association to the kinetochore.

It localises to the nucleus. The protein localises to the chromosome. It is found in the centromere. In terms of biological role, histone H3-like nucleosomal protein that is specifically found in centromeric nucleosomes. Replaces conventional H3 in the nucleosome core of centromeric chromatin that serves as an assembly site for the inner kinetochore. Required for recruitment and assembly of kinetochore proteins, mitotic progression and chromosome segregation. May serve as an epigenetic mark that propagates centromere identity through replication and cell division. This is Histone H3-like centromeric protein cnp1 (cnp1) from Schizosaccharomyces pombe (strain 972 / ATCC 24843) (Fission yeast).